The sequence spans 202 residues: dITP/XTP pyrophosphatase (202 aa).

7 to 12 (TTNEGK) provides a ligand contact to substrate. Positions 37 and 66 each coordinate Mg(2+). The active-site Proton acceptor is the aspartate 66. Residues serine 67, 155–158 (FGYD), lysine 178, and 183–184 (HR) contribute to the substrate site.

This sequence belongs to the HAM1 NTPase family. In terms of assembly, homodimer. Requires Mg(2+) as cofactor.

It catalyses the reaction XTP + H2O = XMP + diphosphate + H(+). The enzyme catalyses dITP + H2O = dIMP + diphosphate + H(+). The catalysed reaction is ITP + H2O = IMP + diphosphate + H(+). Functionally, pyrophosphatase that catalyzes the hydrolysis of nucleoside triphosphates to their monophosphate derivatives, with a high preference for the non-canonical purine nucleotides XTP (xanthosine triphosphate), dITP (deoxyinosine triphosphate) and ITP. Seems to function as a house-cleaning enzyme that removes non-canonical purine nucleotides from the nucleotide pool, thus preventing their incorporation into DNA/RNA and avoiding chromosomal lesions. The sequence is that of dITP/XTP pyrophosphatase from Aquifex aeolicus (strain VF5).